Consider the following 375-residue polypeptide: Growth/differentiation factor 8 (375 aa).

The N-terminal stretch at 1 to 18 (MQKLQIFVYIYLFMLLVA) is a signal peptide. Positions 19 to 266 (GPVDLNENSE…VTDTPKRSRR (248 aa)) are excised as a propeptide. Residues N48 and N71 are each glycosylated (N-linked (GlcNAc...) asparagine). Disulfide bonds link C272/C282, C281/C340, C309/C372, and C313/C374.

This sequence belongs to the TGF-beta family. Homodimer; disulfide-linked. Interacts with WFIKKN2, leading to inhibit its activity. Interacts with FSTL3. In terms of processing, synthesized as large precursor molecule that undergoes proteolytic cleavage to generate an N-terminal propeptide and a disulfide linked C-terminal dimer, which is the biologically active molecule. The circulating form consists of a latent complex of the C-terminal dimer and other proteins, including its propeptide, which maintain the C-terminal dimer in a latent, inactive state. Ligand activation requires additional cleavage of the prodomain by a tolloid-like metalloproteinase.

The protein resides in the secreted. Acts specifically as a negative regulator of skeletal muscle growth. The protein is Growth/differentiation factor 8 (MSTN) of Capra ibex (Ibex).